The primary structure comprises 517 residues: DNA relaxase MbeA (517 aa).

Tyrosine 19 serves as the catalytic O-(5'-phospho-DNA)-tyrosine intermediate. The a divalent metal cation site is built by histidine 97, glutamate 104, and asparagine 106. Disordered stretches follow at residues 281–310, 380–405, and 496–517; these read YSPVHSLDRGIAGKTPGRGERGDDAAQEGR, PSVREISGGDSLSGERVGTSEGVTQS, and SLERERQPEIQERTLDGPSLGW. Over residues 297–310 the composition is skewed to basic and acidic residues; sequence GRGERGDDAAQEGR. Basic and acidic residues predominate over residues 496 to 510; that stretch reads SLERERQPEIQERTL.

It to E.coli MbaA and MbkA. As to quaternary structure, interacts with MbeB and MbeC to form the relaxosome. Mn(2+) is required as a cofactor. Requires Co(2+) as cofactor. The cofactor is Ni(2+).

It carries out the reaction ATP-independent breakage of single-stranded DNA, followed by passage and rejoining.. Its function is as follows. Relaxase involved in plasmid ColE1 conjugative mobilization and is thus essential to promote the specific transfer of the plasmid during conjugation. First catalyzes the specific cleavage of one of the DNA strands at oriT, forming a covalent 5'-phosphotyrosine intermediate. The nic site corresponds to 5'-(1469)CTGG/CTTA(1462)-3' in the cleaved strand. The cleaved strand is then transferred through the dedicated type IV secretion apparatus. MbeA remains covalently linked at the 5' end of the strand, and once in the recipient cell, it probably catalyzes the rejoining of the two ends of the strand, re-forming the circular plasmid DNA. Is functional in vitro without a requirement for the conjugative accessory proteins. The sequence is that of DNA relaxase MbeA (mbeA) from Escherichia coli.